We begin with the raw amino-acid sequence, 61 residues long: Photosystem II reaction center protein K (61 aa).

The propeptide occupies 1-24 (MPNILSLTCICFNSVIYPTSFFFA). Residues 32-52 (IFNPIVDFMPVIPLFFFLLAF) form a helical membrane-spanning segment.

Belongs to the PsbK family. In terms of assembly, PSII is composed of 1 copy each of membrane proteins PsbA, PsbB, PsbC, PsbD, PsbE, PsbF, PsbH, PsbI, PsbJ, PsbK, PsbL, PsbM, PsbT, PsbX, PsbY, PsbZ, Psb30/Ycf12, at least 3 peripheral proteins of the oxygen-evolving complex and a large number of cofactors. It forms dimeric complexes.

It localises to the plastid. The protein localises to the chloroplast thylakoid membrane. Functionally, one of the components of the core complex of photosystem II (PSII). PSII is a light-driven water:plastoquinone oxidoreductase that uses light energy to abstract electrons from H(2)O, generating O(2) and a proton gradient subsequently used for ATP formation. It consists of a core antenna complex that captures photons, and an electron transfer chain that converts photonic excitation into a charge separation. This is Photosystem II reaction center protein K from Triticum aestivum (Wheat).